The primary structure comprises 197 residues: MAKMMGPRFKMCRRLGLNVVGHPKAMKRAGRGTSRADKKLSDYGIQLLEKQRLRAYYGVMERQFTRYVDQAFNSKEQPGEALLMILESRLDNMVYRMGFASSIRQARQMVNHGHFLVNGKKVNIPSFRLNIGDEVVLREKSRKTEMFVNNFKDSIGSEVPYVSKEEDNFKGIFTRKPKREEIPITIQEQLIVEFYSK.

The S4 RNA-binding domain occupies 88–150; that stretch reads SRLDNMVYRM…SRKTEMFVNN (63 aa).

Belongs to the universal ribosomal protein uS4 family. In terms of assembly, part of the 30S ribosomal subunit. Contacts protein S5. The interaction surface between S4 and S5 is involved in control of translational fidelity.

Its function is as follows. One of the primary rRNA binding proteins, it binds directly to 16S rRNA where it nucleates assembly of the body of the 30S subunit. With S5 and S12 plays an important role in translational accuracy. The sequence is that of Small ribosomal subunit protein uS4B (rpsD2) from Clostridium perfringens (strain 13 / Type A).